The primary structure comprises 68 residues: Antimicrobial peptide Eval655 (68 aa).

The N-terminal stretch at Met1–Ala23 is a signal peptide. Leu36 is subject to Leucine amide. Positions Gly37–Arg68 are excised as a propeptide.

The protein belongs to the non-disulfide-bridged peptide (NDBP) superfamily. Short antimicrobial peptide (group 4) family. In terms of tissue distribution, expressed by the venom gland.

It is found in the secreted. Probable antimicrobial peptide. Shows low inhibitory activity against herpes simplex virus type 1 (HSV-1). The polypeptide is Antimicrobial peptide Eval655 (Euscorpiops validus (Scorpion)).